Consider the following 601-residue polypeptide: MSATDRVNLMCANVLAAVAWPYANGPRHIGHVSGFGVPSDVFARYMRMSGHRVLMVSGSDCHGTAISVKADQEGVTAQECAEKYHRIIAADLQGLGLSYDLYTSTLTDNHAHVTQEIFTRLHENGYVVKRSEMGAFEPSTGRTLPDRYIEGTCPVCGYDDARGDQCDNCGRQLDPADLIGPRSKTTGAAPEFRETEHFFLDLPALAESLASWIDTRTDWRPNVLKFSHNLLEELRPRAITRDLDWGIRVPVEGWQDNPMKSIYVWFDAVIGYLSASIEWARRIGRPDAWREFWNDEDARSYYFMGKDNIVFHSVIWPGILLGTNGRGDKGGEPSEELGTLNLPTEIVSSEFLTMSGSKVSNSRGATIFVGDFLHEFGPDALRYFIAVAGPENQDTDFTWEEFVRRVNFELANEWGNLVNRSISMAFKNCHEIPAAGELTDADRELLDAAAAGFDTVGGLLAHARFKAAITEAMRIVGLANAYISAEEPWKLKDNPERRDTVLHVALQVVSDVNTMMTPFMPHSAQKIYEALGGEGVWAAQPELIETDGAPILMGDYATEQASWGRHEITVGTPLSKPSPIFRKLDAKLAQTGPQWAPVNPQ.

Residues 21 to 31 (PYANGPRHIGH) carry the 'HIGH' region motif. Zn(2+)-binding residues include Cys-153, Cys-156, Cys-166, and Cys-169. An ATP-binding site is contributed by Asn-361.

The protein belongs to the class-I aminoacyl-tRNA synthetase family. MetG type 1 subfamily. In terms of assembly, monomer. The cofactor is Zn(2+).

It localises to the cytoplasm. It catalyses the reaction tRNA(Met) + L-methionine + ATP = L-methionyl-tRNA(Met) + AMP + diphosphate. Functionally, is required not only for elongation of protein synthesis but also for the initiation of all mRNA translation through initiator tRNA(fMet) aminoacylation. In Cutibacterium acnes (strain DSM 16379 / KPA171202) (Propionibacterium acnes), this protein is Methionine--tRNA ligase.